The sequence spans 220 residues: Deoxyribose-phosphate aldolase (220 aa).

D89 acts as the Proton donor/acceptor in catalysis. K151 (schiff-base intermediate with acetaldehyde) is an active-site residue. The active-site Proton donor/acceptor is K180.

It belongs to the DeoC/FbaB aldolase family. DeoC type 1 subfamily.

The protein resides in the cytoplasm. It carries out the reaction 2-deoxy-D-ribose 5-phosphate = D-glyceraldehyde 3-phosphate + acetaldehyde. Its pathway is carbohydrate degradation; 2-deoxy-D-ribose 1-phosphate degradation; D-glyceraldehyde 3-phosphate and acetaldehyde from 2-deoxy-alpha-D-ribose 1-phosphate: step 2/2. Catalyzes a reversible aldol reaction between acetaldehyde and D-glyceraldehyde 3-phosphate to generate 2-deoxy-D-ribose 5-phosphate. The chain is Deoxyribose-phosphate aldolase from Streptococcus mutans serotype c (strain ATCC 700610 / UA159).